Here is a 373-residue protein sequence, read N- to C-terminus: Chaperone protein DnaJ (373 aa).

A J domain is found at 4–68 (DYYEILGLTK…VKREQYNQFG (65 aa)). The CR-type zinc finger occupies 142-224 (GKEIVEPLEK…CKGKTHTKTT (83 aa)). Residues Cys155, Cys158, Cys172, Cys175, Cys198, Cys201, Cys212, and Cys215 each contribute to the Zn(2+) site. CXXCXGXG motif repeat units lie at residues 155 to 162 (CNTCNGSG), 172 to 179 (CTQCSGMG), 198 to 205 (CSKCNGIG), and 212 to 219 (CLICKGKT).

The protein belongs to the DnaJ family. Homodimer. Zn(2+) is required as a cofactor.

The protein localises to the cytoplasm. In terms of biological role, participates actively in the response to hyperosmotic and heat shock by preventing the aggregation of stress-denatured proteins and by disaggregating proteins, also in an autonomous, DnaK-independent fashion. Unfolded proteins bind initially to DnaJ; upon interaction with the DnaJ-bound protein, DnaK hydrolyzes its bound ATP, resulting in the formation of a stable complex. GrpE releases ADP from DnaK; ATP binding to DnaK triggers the release of the substrate protein, thus completing the reaction cycle. Several rounds of ATP-dependent interactions between DnaJ, DnaK and GrpE are required for fully efficient folding. Also involved, together with DnaK and GrpE, in the DNA replication of plasmids through activation of initiation proteins. The chain is Chaperone protein DnaJ from Mycoplasma mobile (strain ATCC 43663 / 163K / NCTC 11711) (Mesomycoplasma mobile).